The sequence spans 257 residues: Ribosomal RNA small subunit methyltransferase J (257 aa).

Residues 107–108, 123–124, and D177 contribute to the S-adenosyl-L-methionine site; these read RD and ER.

This sequence belongs to the methyltransferase superfamily. RsmJ family.

It localises to the cytoplasm. It carries out the reaction guanosine(1516) in 16S rRNA + S-adenosyl-L-methionine = N(2)-methylguanosine(1516) in 16S rRNA + S-adenosyl-L-homocysteine + H(+). Specifically methylates the guanosine in position 1516 of 16S rRNA. The protein is Ribosomal RNA small subunit methyltransferase J of Haemophilus influenzae (strain 86-028NP).